The primary structure comprises 399 residues: Fe-coproporphyrin III synthase (399 aa).

One can recognise a Radical SAM core domain in the interval 36-253 (KDKKPVVVWN…TRKLHEKGFP (218 aa)). Residues Cys50, Cys54, and Cys57 each coordinate [4Fe-4S] cluster.

It belongs to the radical SAM superfamily. [4Fe-4S] cluster serves as cofactor.

The enzyme catalyses 12,18-didecarboxysiroheme + 2 AH2 + 2 S-adenosyl-L-methionine = Fe-coproporphyrin III + 2 5'-deoxyadenosine + 2 L-methionine + 2 acetate + 2 A + 2 H(+). It functions in the pathway porphyrin-containing compound metabolism; protoheme biosynthesis. Functionally, involved in siroheme-dependent heme b biosynthesis. Catalyzes the conversion of didecarboxysiroheme into Fe-coproporphyrin III by oxidative loss of two acetic acid side chains. This chain is Fe-coproporphyrin III synthase, found in Methanosarcina barkeri (strain Fusaro / DSM 804).